The chain runs to 196 residues: HTH-type transcriptional regulator BetI (196 aa).

The HTH tetR-type domain occupies 8–68; that stretch reads EVRRAQLIDA…ATMRHILRDL (61 aa). The H-T-H motif DNA-binding region spans 31 to 50; the sequence is TLASVAQRANISTGIVSHYF.

The protein operates within amine and polyamine biosynthesis; betaine biosynthesis via choline pathway [regulation]. Its function is as follows. Repressor involved in the biosynthesis of the osmoprotectant glycine betaine. It represses transcription of the choline transporter BetT and the genes of BetAB involved in the synthesis of glycine betaine. The chain is HTH-type transcriptional regulator BetI from Paraburkholderia phymatum (strain DSM 17167 / CIP 108236 / LMG 21445 / STM815) (Burkholderia phymatum).